Reading from the N-terminus, the 308-residue chain is tRNA-cytidine(32) 2-sulfurtransferase (308 aa).

A PP-loop motif motif is present at residues 39–44; sequence SGGKDS. [4Fe-4S] cluster contacts are provided by Cys114, Cys117, and Cys205.

This sequence belongs to the TtcA family. As to quaternary structure, homodimer. It depends on Mg(2+) as a cofactor. [4Fe-4S] cluster is required as a cofactor.

It is found in the cytoplasm. The enzyme catalyses cytidine(32) in tRNA + S-sulfanyl-L-cysteinyl-[cysteine desulfurase] + AH2 + ATP = 2-thiocytidine(32) in tRNA + L-cysteinyl-[cysteine desulfurase] + A + AMP + diphosphate + H(+). The protein operates within tRNA modification. Catalyzes the ATP-dependent 2-thiolation of cytidine in position 32 of tRNA, to form 2-thiocytidine (s(2)C32). The sulfur atoms are provided by the cysteine/cysteine desulfurase (IscS) system. This Cupriavidus taiwanensis (strain DSM 17343 / BCRC 17206 / CCUG 44338 / CIP 107171 / LMG 19424 / R1) (Ralstonia taiwanensis (strain LMG 19424)) protein is tRNA-cytidine(32) 2-sulfurtransferase.